The primary structure comprises 240 residues: Chromatin structure-remodeling complex protein BSH (240 aa).

Belongs to the SNF5 family. As to quaternary structure, interacts with SWI3A and SWI3B, but not with BRM. Expressed in roots, stems, leaves, flowers and siliques.

It is found in the nucleus. Its function is as follows. Component of a multiprotein complex equivalent of the yeast SWI/SNF complex, an ATP-dependent chromatin-remodeling complex, which is required for the positive and negative regulation of gene expression of a large number of genes. It changes chromatin structure by altering DNA-histone contacts within a nucleosome, leading eventually to a change in nucleosome position, thus facilitating or repressing binding of gene-specific transcription factors. This is Chromatin structure-remodeling complex protein BSH (BSH) from Arabidopsis thaliana (Mouse-ear cress).